A 236-amino-acid chain; its full sequence is Small ribosomal subunit protein uS2c (236 aa).

It belongs to the universal ribosomal protein uS2 family.

The protein localises to the plastid. Its subcellular location is the chloroplast. The sequence is that of Small ribosomal subunit protein uS2c (rps2) from Eucalyptus globulus subsp. globulus (Tasmanian blue gum).